The following is a 225-amino-acid chain: Large ribosomal subunit protein bL25 (225 aa).

Positions Glu188 to Glu225 are disordered. Acidic residues predominate over residues Thr204–Ala217.

The protein belongs to the bacterial ribosomal protein bL25 family. CTC subfamily. As to quaternary structure, part of the 50S ribosomal subunit; part of the 5S rRNA/L5/L18/L25 subcomplex. Contacts the 5S rRNA. Binds to the 5S rRNA independently of L5 and L18.

Functionally, this is one of the proteins that binds to the 5S RNA in the ribosome where it forms part of the central protuberance. This is Large ribosomal subunit protein bL25 from Exiguobacterium sibiricum (strain DSM 17290 / CCUG 55495 / CIP 109462 / JCM 13490 / 255-15).